The primary structure comprises 215 residues: 3-isopropylmalate dehydratase small subunit (215 aa).

The protein belongs to the LeuD family. LeuD type 1 subfamily. Heterodimer of LeuC and LeuD.

The catalysed reaction is (2R,3S)-3-isopropylmalate = (2S)-2-isopropylmalate. It participates in amino-acid biosynthesis; L-leucine biosynthesis; L-leucine from 3-methyl-2-oxobutanoate: step 2/4. In terms of biological role, catalyzes the isomerization between 2-isopropylmalate and 3-isopropylmalate, via the formation of 2-isopropylmaleate. This Saccharophagus degradans (strain 2-40 / ATCC 43961 / DSM 17024) protein is 3-isopropylmalate dehydratase small subunit.